Consider the following 274-residue polypeptide: Large ribosomal subunit protein uL2 (274 aa).

The tract at residues 1-23 (MAIKIYRPTSPGRRHHSVSSFEE) is disordered.

It belongs to the universal ribosomal protein uL2 family. Part of the 50S ribosomal subunit. Forms a bridge to the 30S subunit in the 70S ribosome.

One of the primary rRNA binding proteins. Required for association of the 30S and 50S subunits to form the 70S ribosome, for tRNA binding and peptide bond formation. It has been suggested to have peptidyltransferase activity; this is somewhat controversial. Makes several contacts with the 16S rRNA in the 70S ribosome. The polypeptide is Large ribosomal subunit protein uL2 (Dehalococcoides mccartyi (strain ATCC BAA-2100 / JCM 16839 / KCTC 5957 / BAV1)).